Reading from the N-terminus, the 71-residue chain is Metallothionein-like protein 1 (71 aa).

The protein belongs to the metallothionein superfamily. Type 15 family.

In terms of biological role, metallothioneins have a high content of cysteine residues that bind various heavy metals. This Casuarina glauca (Swamp oak) protein is Metallothionein-like protein 1 (MT1).